The sequence spans 449 residues: Chlorobenzene dioxygenase subunit alpha (449 aa).

Residues 54 to 163 enclose the Rieske domain; sequence WLLLGHETQI…VATYKGLIFA (110 aa). Cysteine 96, histidine 98, cysteine 116, and histidine 119 together coordinate [2Fe-2S] cluster. The Fe cation site is built by histidine 222, histidine 228, and aspartate 376.

This sequence belongs to the bacterial ring-hydroxylating dioxygenase alpha subunit family. In terms of assembly, this dioxygenase system consists of four proteins: the two subunits of the oxygenase component (TecA1 and TecA2), a ferredoxin (TecA3) and a ferredoxin reductase (TecA4). It depends on [2Fe-2S] cluster as a cofactor. Requires Fe cation as cofactor.

It carries out the reaction chlorobenzene + NADH + O2 + H(+) = (1R,2R)-3-chlorocyclohexa-3,5-diene-1,2-diol + NAD(+). It participates in aromatic compound metabolism. Part of the oxygenase component of the chlorobenzene dioxygenase system that catalyzes the dihydroxylation of a range of aromatic compounds, including chlorinated benzenes and toluenes, and dinuclear aromatics such as biphenyl and dibenzo-p-dioxin. The alpha subunit is responsible for substrate specificity. This Cupriavidus sp. (strain PS12) protein is Chlorobenzene dioxygenase subunit alpha.